We begin with the raw amino-acid sequence, 193 residues long: 7-methyl-GTP pyrophosphatase (193 aa).

Residue Asp70 is the Proton acceptor of the active site.

This sequence belongs to the Maf family. YceF subfamily. It depends on a divalent metal cation as a cofactor.

The protein localises to the cytoplasm. The catalysed reaction is N(7)-methyl-GTP + H2O = N(7)-methyl-GMP + diphosphate + H(+). Nucleoside triphosphate pyrophosphatase that hydrolyzes 7-methyl-GTP (m(7)GTP). May have a dual role in cell division arrest and in preventing the incorporation of modified nucleotides into cellular nucleic acids. This is 7-methyl-GTP pyrophosphatase from Photobacterium profundum (strain SS9).